A 247-amino-acid polypeptide reads, in one-letter code: 14-3-3 protein gamma-B (247 aa).

The protein belongs to the 14-3-3 family. In terms of assembly, homodimer, and heterodimer with other family members.

The protein resides in the cytoplasm. In terms of biological role, adapter protein implicated in the regulation of a large spectrum of both general and specialized signaling pathways. Binds to a large number of partners, usually by recognition of a phosphoserine or phosphothreonine motif. Binding generally results in the modulation of the activity of the binding partner. The protein is 14-3-3 protein gamma-B (ywhag-b) of Xenopus laevis (African clawed frog).